The primary structure comprises 114 residues: uncharacterized protein (114 aa).

Residues 6 to 114 (IFSKIIRREI…GGRPFSWPPG (109 aa)) enclose the HIT domain. Positions 98–102 (HLHLH) match the Histidine triad motif motif.

This is an uncharacterized protein from Synechocystis sp. (strain ATCC 27184 / PCC 6803 / Kazusa).